Here is a 177-residue protein sequence, read N- to C-terminus: ATP synthase subunit delta (177 aa).

This sequence belongs to the ATPase delta chain family. F-type ATPases have 2 components, F(1) - the catalytic core - and F(0) - the membrane proton channel. F(1) has five subunits: alpha(3), beta(3), gamma(1), delta(1), epsilon(1). F(0) has three main subunits: a(1), b(2) and c(10-14). The alpha and beta chains form an alternating ring which encloses part of the gamma chain. F(1) is attached to F(0) by a central stalk formed by the gamma and epsilon chains, while a peripheral stalk is formed by the delta and b chains.

The protein localises to the cell inner membrane. In terms of biological role, f(1)F(0) ATP synthase produces ATP from ADP in the presence of a proton or sodium gradient. F-type ATPases consist of two structural domains, F(1) containing the extramembraneous catalytic core and F(0) containing the membrane proton channel, linked together by a central stalk and a peripheral stalk. During catalysis, ATP synthesis in the catalytic domain of F(1) is coupled via a rotary mechanism of the central stalk subunits to proton translocation. Functionally, this protein is part of the stalk that links CF(0) to CF(1). It either transmits conformational changes from CF(0) to CF(1) or is implicated in proton conduction. In Klebsiella pneumoniae (strain 342), this protein is ATP synthase subunit delta.